Reading from the N-terminus, the 150-residue chain is D-aminoacyl-tRNA deacylase (150 aa).

Residues 137-138 (GP) carry the Gly-cisPro motif, important for rejection of L-amino acids motif.

It belongs to the DTD family. Homodimer.

The protein localises to the cytoplasm. The enzyme catalyses glycyl-tRNA(Ala) + H2O = tRNA(Ala) + glycine + H(+). It carries out the reaction a D-aminoacyl-tRNA + H2O = a tRNA + a D-alpha-amino acid + H(+). Its function is as follows. An aminoacyl-tRNA editing enzyme that deacylates mischarged D-aminoacyl-tRNAs. Also deacylates mischarged glycyl-tRNA(Ala), protecting cells against glycine mischarging by AlaRS. Acts via tRNA-based rather than protein-based catalysis; rejects L-amino acids rather than detecting D-amino acids in the active site. By recycling D-aminoacyl-tRNA to D-amino acids and free tRNA molecules, this enzyme counteracts the toxicity associated with the formation of D-aminoacyl-tRNA entities in vivo and helps enforce protein L-homochirality. This chain is D-aminoacyl-tRNA deacylase, found in Listeria monocytogenes serotype 4b (strain CLIP80459).